The following is an 896-amino-acid chain: MFGSLVKKVFGSKNEREIKKLWPIVARINELEASISPLSDEQLRDKTAEFKERHGKGESLDALMPEAFAVCREASKRVLGMRHFDVQLIGGMVLHSGKISEMKTGEGKTLVATLPAYLNAISGKGVHVVTVNDYLARRDSEWMGRLYSFLGLTVGVIVHGVEDDQRRINYAADITYGTNNEFGFDYLRDNMKFSLDDYVQRGFNFAIVDEVDSILIDEARTPLIISGPTEDSTDKYYVIDRIIPLLKKGEVKEEEANTLSGKRKLYTGDFTIDEKAKSATLTEQGVLKVEKLLKVDNLYDPRNIEFLHHTQQALRAHAMYRRDVDYVVKDGEVMIVDEFTGRLMPGRRWSDGLHQAIEAKEGVTIENENQTLATITFQNYFRMYKKLGGMTGTADTEAEEFHKIYKLDVVVIPTNRPLLRPDFPDVIYKTEREKFGAVIQDIKEHYATGQPCLVGTISIEKSEVLSELLKREGIPHNVLNAKQHEREAEIVSQAGRLKAITIATNMAGRGTDILLGGNADALASQWRRANPEAGEEEYQAILKNYKTVCAAEHDEVVRLGGLHIIGTERHESRRIDNQLRGRSGRQGDPGSSRFYLSLEDDLLRIFGSERVSKIMDFLKIEEGEAITHAMINKSIENAQKKVEAHNFDIRKHLIEYDDVMNKQREVIYTQRREILGGQDIRESFLEMLDETVEEIVASYAIEKSPAEEWDWQAINEAVFKCFNLQFELPQDTMARLTPAGLKEMLAEQAHALFAARVKEMGDDLIDHLIKVMMLQAIDTHWKDHLLNIDHLKEGIGLRGYGQKDPKQEYKKEAYELFMGLIMRIREEVVERIFWVQLERPEEVEEIEEEQRSKKIVFNLSEEEERVQEPARSNRVAGRNDPCPCGSGKKYKKCCGK.

ATP contacts are provided by residues Q87, G105–T109, and D512. Residues Q867 to K889 form a disordered region. Residues C882, C884, C893, and C894 each coordinate Zn(2+).

This sequence belongs to the SecA family. As to quaternary structure, monomer and homodimer. Part of the essential Sec protein translocation apparatus which comprises SecA, SecYEG and auxiliary proteins SecDF-YajC and YidC. Zn(2+) serves as cofactor.

The protein localises to the cell inner membrane. It is found in the cytoplasm. The enzyme catalyses ATP + H2O + cellular proteinSide 1 = ADP + phosphate + cellular proteinSide 2.. In terms of biological role, part of the Sec protein translocase complex. Interacts with the SecYEG preprotein conducting channel. Has a central role in coupling the hydrolysis of ATP to the transfer of proteins into and across the cell membrane, serving as an ATP-driven molecular motor driving the stepwise translocation of polypeptide chains across the membrane. This chain is Protein translocase subunit SecA, found in Pelobacter propionicus (strain DSM 2379 / NBRC 103807 / OttBd1).